The following is a 484-amino-acid chain: Monocarboxylate transporter 2 (484 aa).

Topologically, residues 1–16 (MPSEPSAPLPQPLPPD) are cytoplasmic. Residues 17-37 (GGWGWVVVCASFISIGFSYAF) traverse the membrane as a helical segment. At 38–60 (PKAVTVFFKDIQEIFNTTSSQIA) the chain is on the extracellular side. The chain crosses the membrane as a helical span at residues 61–81 (WISSIMLAVMYAGGPISSVLV). Topologically, residues 82–90 (NNYGSRPVV) are cytoplasmic. Residues 91-111 (IVGGLLCCIGMILASYSNSVI) form a helical membrane-spanning segment. The Extracellular segment spans residues 112–116 (ELYLT). A helical transmembrane segment spans residues 117-137 (VGFIGGLGLAFNLQPALTIIG). Residues 138 to 149 (KYFYRRRPLANG) lie on the Cytoplasmic side of the membrane. The chain crosses the membrane as a helical span at residues 150–170 (CAMAGSPVFLSTLAPFNQYLF). At 171–174 (NNYG) the chain is on the extracellular side. The chain crosses the membrane as a helical span at residues 175–195 (WKGSFLILGGIFLHSCVAGCL). Topologically, residues 196–245 (MRPVGPSPNTKKSKSKVGSRHDSTLKKASKVSTAQKVNRFLDFSLFMHRG) are cytoplasmic. The helical transmembrane segment at 246-266 (FLIYLSGNVILFLGIFAPIIF) threads the bilayer. At 267-281 (LAQYAKHIGVDDYNS) the chain is on the extracellular side. A helical transmembrane segment spans residues 282 to 302 (AFLLSVMAFIDMFARPSVGLI). The Cytoplasmic portion of the chain corresponds to 303–311 (ANTSLIRPR). A helical membrane pass occupies residues 312–332 (IQYLFSSAIIFTGICHLLCPL). Topologically, residues 333–337 (ATTYS) are extracellular. The helical transmembrane segment at 338-358 (ALVVYVVFFGLGFGSISSLLF) threads the bilayer. Residues 359–372 (ECLMDIVGATRFSS) are Cytoplasmic-facing. Residues 373-393 (AVGLTTIVECCPVLFGPPLAG) form a helical membrane-spanning segment. The Extracellular segment spans residues 394–405 (KLLDITGEYKYL). Residues 406 to 426 (YIASGTVVLVSGTYLLIGNAI) form a helical membrane-spanning segment. Residues 427-484 (NYRLLDKERKREKAKKKKSASHASREMEALNRSKQDEVTVKASNAHNPPSDRDKESNI) are Cytoplasmic-facing. Residues 438–484 (EKAKKKKSASHASREMEALNRSKQDEVTVKASNAHNPPSDRDKESNI) form a disordered region. Composition is skewed to basic and acidic residues over residues 449-465 (ASREMEALNRSKQDEVT) and 475-484 (PSDRDKESNI).

This sequence belongs to the major facilitator superfamily. Monocarboxylate porter (TC 2.A.1.13) family. As to quaternary structure, homodimer. Interacts with GRID2IP. Interacts with EMB; interaction mediates SLC16A7 targeting to the plasma membrane. Interacts with isoform 2 of BSG. Detected in testis and in spermatozoa (at protein level).

It localises to the cell membrane. The protein resides in the cytoplasm. The protein localises to the basolateral cell membrane. It catalyses the reaction (S)-lactate(in) + H(+)(in) = (S)-lactate(out) + H(+)(out). The enzyme catalyses 3-methyl-2-oxobutanoate(out) + H(+)(out) = 3-methyl-2-oxobutanoate(in) + H(+)(in). The catalysed reaction is acetoacetate(out) + H(+)(out) = acetoacetate(in) + H(+)(in). It carries out the reaction (R)-3-hydroxybutanoate(out) + H(+)(out) = (R)-3-hydroxybutanoate(in) + H(+)(in). It catalyses the reaction 4-methyl-2-oxopentanoate(out) + H(+)(out) = 4-methyl-2-oxopentanoate(in) + H(+)(in). The enzyme catalyses pyruvate(out) + H(+)(out) = pyruvate(in) + H(+)(in). The catalysed reaction is (S)-3-hydroxybutanoate(out) + H(+)(out) = (S)-3-hydroxybutanoate(in) + H(+)(in). With respect to regulation, transport activity exhibits steep dependence on substrate concentration. Substrate concentration sensitivity of SLC16A7 arises from the strong inter-subunit cooperativity of the SLC16A7 dimer during transport. Inhibited by AR-C155858. In terms of biological role, proton-coupled monocarboxylate symporter. Catalyzes the rapid transport across the plasma membrane of monocarboxylates such as L-lactate, pyruvate and ketone bodies, acetoacetate, beta-hydroxybutyrate and acetate. Dimerization is functionally required and both subunits work cooperatively in transporting substrate. This is Monocarboxylate transporter 2 (Slc16a7) from Mus musculus (Mouse).